A 352-amino-acid chain; its full sequence is CD5 antigen-like (352 aa).

A signal peptide spans 1-21 (MAPLFNLMLAILSIFVGSCFS). 3 consecutive SRCR domains span residues 27-128 (VQLV…AQCE), 141-241 (VRLV…MECE), and 246-348 (LKLV…VICT). Disulfide bonds link Cys-36/Cys-70, Cys-52/Cys-117, Cys-65/Cys-127, Cys-98/Cys-108, Cys-166/Cys-230, Cys-179/Cys-240, Cys-211/Cys-221, Cys-255/Cys-289, Cys-271/Cys-337, Cys-284/Cys-347, and Cys-317/Cys-327. Asn-99 is a glycosylation site (N-linked (GlcNAc...) asparagine). Asn-229 carries N-linked (GlcNAc...) asparagine glycosylation.

Interacts with FASN; the interaction is direct. Interacts (via SRCR2 and SRCR3) with pentameric IgM (via Fc region); disulfide-linked. Post-translationally, N-glycosylated. N-glycan at Asn-99 possesses only alpha2,6-sialylated terminals, while Asn-229 possesses both alpha2,6-sialylated and non-sialylated terminals. N-glycosylation increases secretion. In terms of tissue distribution, specifically expressed in tissue macrophages. Expressed in thymus, liver, spleen and lymph nodes. Present in Th17 cells; mainly present in non-pathogenic Th17 cells.

Its subcellular location is the secreted. The protein resides in the cytoplasm. Its function is as follows. Secreted protein that acts as a key regulator of lipid synthesis: mainly expressed by macrophages in lymphoid and inflamed tissues and regulates mechanisms in inflammatory responses, such as infection or atherosclerosis. Able to inhibit lipid droplet size in adipocytes. Following incorporation into mature adipocytes via CD36-mediated endocytosis, associates with cytosolic FASN, inhibiting fatty acid synthase activity and leading to lipolysis, the degradation of triacylglycerols into glycerol and free fatty acids (FFA). CD5L-induced lipolysis occurs with progression of obesity: participates in obesity-associated inflammation following recruitment of inflammatory macrophages into adipose tissues, a cause of insulin resistance and obesity-related metabolic disease. Regulation of intracellular lipids mediated by CD5L has a direct effect on transcription regulation mediated by nuclear receptors ROR-gamma (RORC). Acts as a key regulator of metabolic switch in T-helper Th17 cells. Regulates the expression of pro-inflammatory genes in Th17 cells by altering the lipid content and limiting synthesis of cholesterol ligand of RORC, the master transcription factor of Th17-cell differentiation. CD5L is mainly present in non-pathogenic Th17 cells, where it decreases the content of polyunsaturated fatty acyls (PUFA), affecting two metabolic proteins MSMO1 and CYP51A1, which synthesize ligands of RORC, limiting RORC activity and expression of pro-inflammatory genes. Participates in obesity-associated autoimmunity via its association with IgM, interfering with the binding of IgM to Fcalpha/mu receptor and enhancing the development of long-lived plasma cells that produce high-affinity IgG autoantibodies. Also acts as an inhibitor of apoptosis in macrophages: promotes macrophage survival from the apoptotic effects of oxidized lipids in case of atherosclerosis. Involved in early response to microbial infection against various pathogens by acting as a pattern recognition receptor and by promoting autophagy. This chain is CD5 antigen-like (Cd5l), found in Mus musculus (Mouse).